Consider the following 57-residue polypeptide: Potassium channel toxin alpha-KTx 1.5 (57 aa).

The signal sequence occupies residues 1–20 (MKISFLLLALVICSIGWSEA). Glutamine 21 carries the pyrrolidone carboxylic acid modification. 3 cysteine pairs are disulfide-bonded: cysteine 27–cysteine 48, cysteine 33–cysteine 53, and cysteine 37–cysteine 55.

This sequence belongs to the short scorpion toxin superfamily. Potassium channel inhibitor family. Alpha-KTx 01 subfamily. As to expression, expressed by the venom gland.

It localises to the secreted. Functionally, potent blocker of both large-conductance calcium-activated potassium channels (KCa1.1/KCNMA1) and voltage-gated potassium channels (Kv1.3/KCNA3). Has also been shown to moderately inhibit Kv1.2/KCNA2 and weakly inhibit Kv1.1/KCNA1 channels, as well as 5-hydroxytryptamine 3 receptors (HTR3A). The protein is Potassium channel toxin alpha-KTx 1.5 of Olivierus martensii (Manchurian scorpion).